Here is a 312-residue protein sequence, read N- to C-terminus: Magnesium protoporphyrin IX methyltransferase, chloroplastic (312 aa).

The N-terminal 39 residues, 1–39 (MPFAPSLLSSSSSVSQFLPRFPNATRFNVTPRSRAATVV), are a transit peptide targeting the chloroplast.

This sequence belongs to the class I-like SAM-binding methyltransferase superfamily. Magnesium protoporphyrin O-methyltransferase family.

It localises to the plastid. Its subcellular location is the chloroplast membrane. It is found in the chloroplast thylakoid membrane. The enzyme catalyses Mg-protoporphyrin IX + S-adenosyl-L-methionine = Mg-protoporphyrin IX 13-monomethyl ester + S-adenosyl-L-homocysteine. The protein operates within porphyrin-containing compound metabolism; chlorophyll biosynthesis. Regulated by the folate status via an increased concentration of S-adenosyl-homocysteine (AdoHcy), a potent inhibitor of most AdoMet-dependent methyltransferases. Converts Mg-protoporphyrin IX to Mg-protoporphyrin IX methylester using S-adenosyl-L-methionine as a cofactor. Involved in chloroplast-to-nucleus signaling by acting as a negative effector of nuclear photosynthetic gene expression. In Arabidopsis thaliana (Mouse-ear cress), this protein is Magnesium protoporphyrin IX methyltransferase, chloroplastic (CHLM).